Reading from the N-terminus, the 451-residue chain is NADP-specific glutamate dehydrogenase (451 aa).

Lys-114 is a catalytic residue.

This sequence belongs to the Glu/Leu/Phe/Val dehydrogenases family. Homohexamer.

The enzyme catalyses L-glutamate + NADP(+) + H2O = 2-oxoglutarate + NH4(+) + NADPH + H(+). The chain is NADP-specific glutamate dehydrogenase (GDH2) from Fusarium fujikuroi (Bakanae and foot rot disease fungus).